A 756-amino-acid chain; its full sequence is Inhibitor of nuclear factor kappa-B kinase subunit beta (756 aa).

A Protein kinase domain is found at 15–300 (WEMKERLGTG…DPVYGPNGCF (286 aa)). Residues 21–29 (LGTGGFGNV) and Lys-44 contribute to the ATP site. Asp-145 acts as the Proton acceptor in catalysis. Lys-163 participates in a covalent cross-link: Glycyl lysine isopeptide (Lys-Gly) (interchain with G-Cter in ubiquitin). Ser-177 carries the phosphoserine; by TBK1 and PKC/PRKCZ modification. An S-nitrosocysteine modification is found at Cys-179. Ser-181 bears the Phosphoserine; by TBK1, PKC/PRKCZ and PDPK1 mark. Pro-191 carries the post-translational modification Hydroxyproline. The tract at residues 458–479 (LLRNNSCLSKMKNSMASMSQQL) is leucine-zipper. Phosphoserine; by autocatalysis is present on residues Ser-670, Ser-672, Ser-675, Ser-682, Ser-689, Ser-697, Ser-705, Ser-733, and Ser-740. The interval 737 to 742 (LDWSWL) is NEMO-binding.

This sequence belongs to the protein kinase superfamily. Ser/Thr protein kinase family. I-kappa-B kinase subfamily. Component of the I-kappa-B-kinase (IKK) core complex consisting of CHUK, IKBKB and IKBKG; probably four alpha/CHUK-beta/IKBKB dimers are associated with four gamma/IKBKG subunits. The IKK core complex seems to associate with regulatory or adapter proteins to form a IKK-signalosome holo-complex. The IKK complex associates with TERF2IP/RAP1, leading to promote IKK-mediated phosphorylation of RELA/p65. Part of a complex composed of NCOA2, NCOA3, CHUK/IKKA, IKBKB, IKBKG and CREBBP. Part of a 70-90 kDa complex at least consisting of CHUK/IKKA, IKBKB, NFKBIA, RELA, ELP1 and MAP3K14. Found in a membrane raft complex, at least composed of BCL10, CARD11, DPP4 and IKBKB. Interacts with SQSTM1 through PRKCZ or PRKCI. Forms an NGF-induced complex with IKBKB, PRKCI and TRAF6. May interact with MAVS/IPS1. Interacts with NALP2. Interacts with TICAM1. Interacts with FAF1; the interaction disrupts the IKK complex formation. Interacts with ATM. Part of a ternary complex consisting of TANK, IKBKB and IKBKG. Interacts with NIBP; the interaction is direct. Interacts with ARRB1 and ARRB2. Interacts with TRIM21. Interacts with NLRC5; prevents IKBKB phosphorylation and kinase activity. Interacts with PDPK1. Interacts with EIF2AK2/PKR. The phosphorylated form interacts with PPM1A and PPM1B. Interacts with ZNF268; the interaction is further increased in a TNF-alpha-dependent manner. Interacts with IKBKE. Interacts with ZC3H12A. Interacts with AKAP13. Interacts with IFIT5; the interaction synergizes the recruitment of IKK to MAP3K7 and enhances IKK phosphorylation. Interacts with LRRC14; disrupts IKBKB-IKBKG interaction preventing I-kappa-B-kinase (IKK) core complex formation and leading to a decrease of IKBKB phosphorylation and NF-kappaB activation. Interacts with SASH1. Interacts with ARFIP2. Interacts with FKBP5. Post-translationally, upon cytokine stimulation, phosphorylated on Ser-177 and Ser-181 by MEKK1 and/or MAP3K14/NIK as well as TBK1 and PRKCZ; which enhances activity. Phosphorylated by MAP3K7/TAK1 in response to NOD1 and NOD2 signaling, promoting activation and phosphorylation of NF-kappa-B inhibitors, leading to NF-kappa-B activation. Once activated, autophosphorylates on the C-terminal serine cluster; which decreases activity and prevents prolonged activation of the inflammatory response. Phosphorylated by the IKK-related kinases TBK1 and IKBKE, which is associated with reduced CHUK/IKKA and IKBKB activity and NF-kappa-B-dependent gene transcription. Dephosphorylated at Ser-177 and Ser-181 by PPM1A and PPM1B. In terms of processing, ubiquitinated. Monoubiquitination involves TRIM21 that leads to inhibition of Tax-induced NF-kappa-B signaling. 'Ser-163' may not serve as a monoubiquitination site. Ubiquitination on 'Ser-163' may modulate phosphorylation on C-terminal serine residues. Hydroxylated by PHD1/EGLN2, loss of hydroxylation under hypoxic conditions results in activation of NF-kappa-B.

The protein localises to the cytoplasm. The protein resides in the nucleus. It is found in the membrane raft. The enzyme catalyses L-seryl-[I-kappa-B protein] + ATP = O-phospho-L-seryl-[I-kappa-B protein] + ADP + H(+). The catalysed reaction is L-seryl-[protein] + ATP = O-phospho-L-seryl-[protein] + ADP + H(+). It catalyses the reaction L-threonyl-[protein] + ATP = O-phospho-L-threonyl-[protein] + ADP + H(+). Serine kinase that plays an essential role in the NF-kappa-B signaling pathway which is activated by multiple stimuli such as inflammatory cytokines, bacterial or viral products, DNA damages or other cellular stresses. Acts as a part of the canonical IKK complex in the conventional pathway of NF-kappa-B activation. Phosphorylates inhibitors of NF-kappa-B on 2 critical serine residues. These modifications allow polyubiquitination of the inhibitors and subsequent degradation by the proteasome. In turn, free NF-kappa-B is translocated into the nucleus and activates the transcription of hundreds of genes involved in immune response, growth control, or protection against apoptosis. In addition to the NF-kappa-B inhibitors, phosphorylates several other components of the signaling pathway including NEMO/IKBKG, NF-kappa-B subunits RELA and NFKB1, as well as IKK-related kinases TBK1 and IKBKE. IKK-related kinase phosphorylations may prevent the overproduction of inflammatory mediators since they exert a negative regulation on canonical IKKs. Phosphorylates FOXO3, mediating the TNF-dependent inactivation of this pro-apoptotic transcription factor. Also phosphorylates other substrates including NAA10, NCOA3, BCL10 and IRS1. Phosphorylates RIPK1 at 'Ser-25' which represses its kinase activity and consequently prevents TNF-mediated RIPK1-dependent cell death. Phosphorylates the C-terminus of IRF5, stimulating IRF5 homodimerization and translocation into the nucleus. The polypeptide is Inhibitor of nuclear factor kappa-B kinase subunit beta (IKBKB) (Bos taurus (Bovine)).